The primary structure comprises 243 residues: Ubiquinone biosynthesis O-methyltransferase (243 aa).

S-adenosyl-L-methionine is bound by residues Arg-44, Gly-64, Asp-85, and Met-129.

Belongs to the methyltransferase superfamily. UbiG/COQ3 family.

The catalysed reaction is a 3-demethylubiquinol + S-adenosyl-L-methionine = a ubiquinol + S-adenosyl-L-homocysteine + H(+). It carries out the reaction a 3-(all-trans-polyprenyl)benzene-1,2-diol + S-adenosyl-L-methionine = a 2-methoxy-6-(all-trans-polyprenyl)phenol + S-adenosyl-L-homocysteine + H(+). The protein operates within cofactor biosynthesis; ubiquinone biosynthesis. O-methyltransferase that catalyzes the 2 O-methylation steps in the ubiquinone biosynthetic pathway. This chain is Ubiquinone biosynthesis O-methyltransferase, found in Cronobacter sakazakii (strain ATCC BAA-894) (Enterobacter sakazakii).